A 134-amino-acid polypeptide reads, in one-letter code: Complexin-1 (134 aa).

2 disordered regions span residues 1–60 (MEFV…AERE) and 74–113 (KKEE…EEED). Basic and acidic residues predominate over residues 15 to 60 (DMGKMLGGDEEKDPDAAKKEEERQEALRQAEEERKAKYAKMEAERE). Positions 29 to 69 (DAAKKEEERQEALRQAEEERKAKYAKMEAEREAVRQGIRDK) form a coiled coil. Residues 48 to 70 (RKAKYAKMEAEREAVRQGIRDKY) form an interaction with the SNARE complex region.

The protein belongs to the complexin/synaphin family. In terms of assembly, binds to the SNARE core complex containing SNAP25, VAMP2 and STX1A. As to expression, nervous system. In hippocampus and cerebellum, expressed mainly by inhibitory neurons. Overexpressed in substantia nigra from patients with Parkinson disease.

The protein resides in the cytoplasm. The protein localises to the cytosol. It localises to the perikaryon. Its subcellular location is the presynapse. Its function is as follows. Positively regulates a late step in exocytosis of various cytoplasmic vesicles, such as synaptic vesicles and other secretory vesicles. Organizes the SNAREs into a cross-linked zigzag topology that, when interposed between the vesicle and plasma membranes, is incompatible with fusion, thereby preventing SNAREs from releasing neurotransmitters until an action potential arrives at the synapse. Also involved in glucose-induced secretion of insulin by pancreatic beta-cells. Essential for motor behavior. The sequence is that of Complexin-1 (CPLX1) from Homo sapiens (Human).